The following is a 508-amino-acid chain: Photosystem II CP47 reaction center protein (508 aa).

Helical transmembrane passes span 21 to 36 (SVHIMHTALVSGWAGS), 101 to 115 (IMFSGLCFLAAIWHW), 140 to 156 (GIHLFLSGLACFGFGAF), 203 to 218 (IAAGTLGILAGLFHLS), 237 to 252 (VLSSSIAAVFFAAFVV), and 457 to 472 (SFALLFFFGHIWHGAR).

It belongs to the PsbB/PsbC family. PsbB subfamily. In terms of assembly, PSII is composed of 1 copy each of membrane proteins PsbA, PsbB, PsbC, PsbD, PsbE, PsbF, PsbH, PsbI, PsbJ, PsbK, PsbL, PsbM, PsbT, PsbX, PsbY, PsbZ, Psb30/Ycf12, at least 3 peripheral proteins of the oxygen-evolving complex and a large number of cofactors. It forms dimeric complexes. Binds multiple chlorophylls. PSII binds additional chlorophylls, carotenoids and specific lipids. is required as a cofactor.

The protein resides in the plastid. The protein localises to the chloroplast thylakoid membrane. Its function is as follows. One of the components of the core complex of photosystem II (PSII). It binds chlorophyll and helps catalyze the primary light-induced photochemical processes of PSII. PSII is a light-driven water:plastoquinone oxidoreductase, using light energy to abstract electrons from H(2)O, generating O(2) and a proton gradient subsequently used for ATP formation. The polypeptide is Photosystem II CP47 reaction center protein (Ceratophyllum demersum (Rigid hornwort)).